The chain runs to 525 residues: GMP synthase [glutamine-hydrolyzing] (525 aa).

The 200-residue stretch at 8–207 folds into the Glutamine amidotransferase type-1 domain; it reads KILILDFGSQ…ALDICGCKAN (200 aa). Cysteine 85 acts as the Nucleophile in catalysis. Residues histidine 181 and glutamate 183 contribute to the active site. The 193-residue stretch at 208–400 folds into the GMPS ATP-PPase domain; it reads WKPSSIIEDA…LGLPYNMLYR (193 aa). 235–241 is a binding site for ATP; sequence SGGVDSS.

In terms of assembly, homodimer.

The catalysed reaction is XMP + L-glutamine + ATP + H2O = GMP + L-glutamate + AMP + diphosphate + 2 H(+). The protein operates within purine metabolism; GMP biosynthesis; GMP from XMP (L-Gln route): step 1/1. Catalyzes the synthesis of GMP from XMP. The sequence is that of GMP synthase [glutamine-hydrolyzing] from Shewanella frigidimarina (strain NCIMB 400).